Reading from the N-terminus, the 255-residue chain is Ribonuclease HII (255 aa).

Positions 73–255 (LYIGGIDEAG…HRKSFLKNIL (183 aa)) constitute an RNase H type-2 domain. A divalent metal cation contacts are provided by aspartate 79, glutamate 80, and aspartate 171.

It belongs to the RNase HII family. Mn(2+) serves as cofactor. Mg(2+) is required as a cofactor.

The protein resides in the cytoplasm. It catalyses the reaction Endonucleolytic cleavage to 5'-phosphomonoester.. Its function is as follows. Endonuclease that specifically degrades the RNA of RNA-DNA hybrids. The chain is Ribonuclease HII from Clostridioides difficile (strain 630) (Peptoclostridium difficile).